The chain runs to 188 residues: Elongation factor P (188 aa).

This sequence belongs to the elongation factor P family.

It localises to the cytoplasm. Its pathway is protein biosynthesis; polypeptide chain elongation. Functionally, involved in peptide bond synthesis. Stimulates efficient translation and peptide-bond synthesis on native or reconstituted 70S ribosomes in vitro. Probably functions indirectly by altering the affinity of the ribosome for aminoacyl-tRNA, thus increasing their reactivity as acceptors for peptidyl transferase. The protein is Elongation factor P of Rickettsia rickettsii (strain Iowa).